We begin with the raw amino-acid sequence, 206 residues long: Fibroblast growth factor 4 (206 aa).

A signal peptide spans 1 to 29 (MAGPGTAAAALLPAVLLAVLAPWAGRGGA).

This sequence belongs to the heparin-binding growth factors family. Interacts with FGFR1, FGFR2, FGFR3 and FGFR4. Affinity between fibroblast growth factors (FGFs) and their receptors is increased by heparan sulfate glycosaminoglycans that function as coreceptors.

It localises to the secreted. Its function is as follows. Plays an important role in the regulation of embryonic development, cell proliferation, and cell differentiation. Required for normal limb and cardiac valve development during embryogenesis. May play a role in embryonic molar tooth bud development via inducing the expression of MSX1, MSX2 and MSX1-mediated expression of SDC1 in dental mesenchyme cells. The protein is Fibroblast growth factor 4 of Bos taurus (Bovine).